The sequence spans 126 residues: Fluoride-specific ion channel FluC 2 (126 aa).

4 helical membrane passes run 11–31 (IFLIGAGGFLGAVCRFLLCEL), 34–54 (GQLGILSVNVIGSFMLGMIMY), 66–86 (GKIAFGTGFMGAFTTFSTFAV), and 93–113 (FIPALGNISANIFLTLTGVFF). Positions 76 and 79 each coordinate Na(+).

It belongs to the fluoride channel Fluc/FEX (TC 1.A.43) family.

It is found in the cell membrane. It catalyses the reaction fluoride(in) = fluoride(out). Its activity is regulated as follows. Na(+) is not transported, but it plays an essential structural role and its presence is essential for fluoride channel function. Fluoride-specific ion channel. Important for reducing fluoride concentration in the cell, thus reducing its toxicity. In Methanosarcina acetivorans (strain ATCC 35395 / DSM 2834 / JCM 12185 / C2A), this protein is Fluoride-specific ion channel FluC 2.